The chain runs to 208 residues: 3-demethoxyubiquinol 3-hydroxylase (208 aa).

Fe cation contacts are provided by Glu57, Glu87, His90, Glu139, Glu171, and His174.

It belongs to the COQ7 family. The cofactor is Fe cation.

It is found in the cell membrane. It carries out the reaction a 5-methoxy-2-methyl-3-(all-trans-polyprenyl)benzene-1,4-diol + AH2 + O2 = a 3-demethylubiquinol + A + H2O. Its pathway is cofactor biosynthesis; ubiquinone biosynthesis. Functionally, catalyzes the hydroxylation of 2-nonaprenyl-3-methyl-6-methoxy-1,4-benzoquinol during ubiquinone biosynthesis. The polypeptide is 3-demethoxyubiquinol 3-hydroxylase (Nitrosomonas eutropha (strain DSM 101675 / C91 / Nm57)).